We begin with the raw amino-acid sequence, 223 residues long: PRA1 family protein B5 (223 aa).

Transmembrane regions (helical) follow at residues 83–103 (SSYF…FSLL), 105–125 (HPFS…LYLF), 146–166 (GGLI…SVLI), 170–190 (MIGI…DLFL), and 196–216 (AASG…APSA).

The protein belongs to the PRA1 family. In terms of assembly, interacts with PRA1B1, PRA1B2, PRA1B3, PRA1B4, PRA1B6 and PRA1E. In terms of tissue distribution, expressed in roots, lateral roots, lateral root caps, columella cells, leaves, and shoot apex.

The protein localises to the endosome membrane. May be involved in both secretory and endocytic intracellular trafficking in the endosomal/prevacuolar compartments. This Arabidopsis thaliana (Mouse-ear cress) protein is PRA1 family protein B5 (PRA1B5).